Consider the following 475-residue polypeptide: Ataxin-10 (475 aa).

The residue at position 10 (Arg-10) is an Omega-N-methylarginine. Phosphoserine occurs at positions 12 and 77. Thr-82 is modified (phosphothreonine). At Ser-430 the chain carries Phosphoserine.

It belongs to the ataxin-10 family. Homooligomer. Interacts with GNB2. Interacts with IQCB1. Interacts with OGT. Post-translationally, polyubiquitinated. Phosphorylation at Ser-12 by AURKB promotes the association of ATXN10 with PLK1. Phosphorylation at Ser-77 and Thr-82 by PLK1 may play a role in the regulation of cytokinesis and may stimulate the proteasome-mediated degradation of ATXN10.

It is found in the cytoplasm. The protein localises to the perinuclear region. It localises to the cytoskeleton. Its subcellular location is the cilium basal body. The protein resides in the microtubule organizing center. It is found in the centrosome. The protein localises to the centriole. It localises to the midbody. May play a role in the regulation of cytokinesis. May play a role in signaling by stimulating protein glycosylation. Induces neuritogenesis by activating the Ras-MAP kinase pathway and is necessary for the survival of cerebellar neurons. Does not appear to play a major role in ciliogenesis. This Bos taurus (Bovine) protein is Ataxin-10 (ATXN10).